A 179-amino-acid chain; its full sequence is Lebocin-1/2 (179 aa).

Residues 1 to 16 (MYKFLVFSSVLVLFFA) form the signal peptide. A propeptide spanning residues 17–120 (QASCQRFIQP…QPIESHRNTR (104 aa)) is cleaved from the precursor. The interval 93–116 (NNEASIEHSHHTVDTGLDQPIESH) is disordered. T135 is a glycosylation site (O-linked (GalNAc...) threonine). A propeptide spanning residues 153 to 179 (RRHASDDQEELRQYNEHFLIPRDIFQE) is cleaved from the precursor.

Belongs to the lebocin family. Post-translationally, O-glycosylation is important for the antibacterial activity of lebocin, O-linked glycan structure is a disaccharide (Gal-GalNAc) in case of lebocin 1 and a monosaccharide (GalNAc) in case of lebocin 2. Hemolymph. Produced in fat body.

Its subcellular location is the secreted. Functionally, antibacterial peptide. This Bombyx mori (Silk moth) protein is Lebocin-1/2.